A 152-amino-acid chain; its full sequence is MSEALTFESKYALLYLGGGLLAMIYGLITFFMAFPAFTSRGNVIFTIKTGPSGEIFLRKRSVLFSEVKRLYMGRHQYSLKGIFFEDIIIEKTDGKIVRIPTWNIITNPLFFEAVERYILPHLNEEAQNNWISQFTEVQRKAYLKEFENHPKL.

The chain crosses the membrane as a helical span at residues Ala-12–Phe-34.

The protein to B.subtilis YfjD.

Its subcellular location is the membrane. This is an uncharacterized protein from Bacillus subtilis (strain 168).